The following is a 338-amino-acid chain: mRNA decay activator protein ZFP36L1 (338 aa).

Residues 1–111 are necessary and sufficient for the association with mRNA decay enzymes and mRNA decay activation; that stretch reads MTTTLVSATI…QKQPGSGQVN (111 aa). The residue at position 54 (serine 54) is a Phosphoserine; by MAPKAPK2. Residues 71–113 form a disordered region; the sequence is LKGEPAPSLSSRDSRFRDRSFSEGGERLLPTQKQPGSGQVNSS. Residues 82–96 are compositionally biased toward basic and acidic residues; the sequence is RDSRFRDRSFSEGGE. The residue at position 90 (serine 90) is a Phosphoserine; by PKB/AKT1. Position 92 is a phosphoserine; by PKB/AKT1 and MAPKAPK2 (serine 92). Residues 101–113 show a composition bias toward polar residues; it reads TQKQPGSGQVNSS. 2 consecutive C3H1-type zinc fingers follow at residues 114–142 and 152–180; these read RYKTELCRPFEENGACKYGDKCQFAHGIH and KYKTELCRTFHTIGFCPYGPRCHFIHNAE. Positions 185–338 are necessary for mRNA decay activation; that stretch reads LAGGRDLSAD…IFSRLSISDD (154 aa). Position 203 is a phosphoserine; by PKB/AKT1 and MAPKAPK2 (serine 203). The disordered stretch occupies residues 273 to 338; that stretch reads SPTTFLFRPM…IFSRLSISDD (66 aa). Low complexity predominate over residues 305–318; sequence YLSSSSSSHSGSDS. Position 318 is a phosphoserine (serine 318). Position 334 is a phosphoserine; by RPS6KA1 (serine 334).

Associates with the cytoplasmic CCR4-NOT deadenylase and RNA exosome complexes to trigger ARE-containing mRNA deadenylation and decay processes. Interacts with CNOT1. Interacts (via N-terminus) with CNOT6. Interacts with CNOT7; this interaction is inhibited in response to phorbol 12-myristate 13-acetate (PMA) treatment in a p38 MAPK-dependent manner. Interacts with DCP1A. Interacts (via N-terminus) with DCP2. Interacts (via N-terminus) with EXOSC2. Interacts with XRN1. Interacts (via phosphorylated form) with YWHAB; this interaction occurs in a protein kinase AKT1-dependent manner. Interacts (via phosphorylated form) with YWHAZ; this interaction occurs in a p38 MAPK- and AKT-signaling pathways. In terms of processing, phosphorylated. Phosphorylated by RPS6KA1 at Ser-334 upon phorbol 12-myristate 13-acetate (PMA) treatment; this phosphorylation results in dissociation of the CCR4-NOT deadenylase complex and induces p38 MAPK-mediated stabilization of the low-density lipoprotein receptor LDLR mRNA. Phosphorylated by protein kinase AKT1 at Ser-92 and Ser-203 in response to insulin; these phosphorylations stabilize ZFP36L1, increase the association with 14-3-3 proteins and mediate ARE-containing mRNA stabilization. AKT1-mediated phosphorylation at Ser-92 does not impair ARE-containing RNA-binding. Phosphorylated at Ser-54, Ser-92 and Ser-203 by MAPKAPK2; these phosphorylations increase the association with 14-3-3 proteins and mediate ARE-containing mRNA stabilization in a protein kinase AKT1-independent manner. MAPKAPK2-mediated phosphorylations at Ser-54, Ser-92 and Ser-203 do not impair ARE-containing RNA-binding. Phosphorylations increase the association with 14-3-3 proteins and mediate ARE-containing mRNA stabilization during early adipogenesis in a p38 MAPK- and AKT-dependent manner. Ubiquitinated. Ubiquitination leads to proteasomal degradation, a process inhibited by phosphorylations at Ser-90, Ser-92 and Ser-203. Expressed in preadipocytes and adipocytes. Expressed in the proximal and distal tubules in the renal cortex (at protein level). Expressed in ovary, heart, kidney, lung, spleen and thymus. Weakly expressed in brain, liver and testis. Expressed in osteoblasts. Expressed in embryonic stem cells (ESCs). Expressed through B lymphocyte development.

Its subcellular location is the nucleus. The protein localises to the cytoplasm. The protein resides in the cytoplasmic granule. It is found in the P-body. In terms of biological role, zinc-finger RNA-binding protein that destabilizes several cytoplasmic AU-rich element (ARE)-containing mRNA transcripts by promoting their poly(A) tail removal or deadenylation, and hence provide a mechanism for attenuating protein synthesis. Acts as a 3'-untranslated region (UTR) ARE mRNA-binding adapter protein to communicate signaling events to the mRNA decay machinery. Functions by recruiting the CCR4-NOT deadenylating complex and components of the cytoplasmic RNA decay machinery to the bound ARE-containing mRNAs, and hence promotes ARE-mediated mRNA deadenylation and decay processes. Also induces the degradation of ARE-containing mRNAs even in absence of poly(A) tail. Binds to 3'-UTR ARE of numerous mRNAs. Positively regulates early adipogenesis by promoting ARE-mediated mRNA decay of immediate early genes (IEGs). Promotes ARE-mediated mRNA decay of mineralocorticoid receptor NR3C2 mRNA in response to hypertonic stress. Negatively regulates hematopoietic/erythroid cell differentiation by promoting ARE-mediated mRNA decay of the transcription factor STAT5B mRNA. Positively regulates monocyte/macrophage cell differentiation by promoting ARE-mediated mRNA decay of the cyclin-dependent kinase CDK6 mRNA. Promotes degradation of ARE-containing pluripotency-associated mRNAs in embryonic stem cells (ESCs), such as NANOG, through a fibroblast growth factor (FGF)-induced MAPK-dependent signaling pathway, and hence attenuates ESC self-renewal and positively regulates mesendoderm differentiation. May play a role in mediating pro-apoptotic effects in malignant B-cells by promoting ARE-mediated mRNA decay of BCL2 mRNA. In association with ZFP36L2 maintains quiescence on developing B lymphocytes by promoting ARE-mediated decay of several mRNAs encoding cell cycle regulators that help B cells progress through the cell cycle, and hence ensuring accurate variable-diversity-joining (VDJ) recombination and functional immune cell formation. Together with ZFP36L2 is also necessary for thymocyte development and prevention of T-cell acute lymphoblastic leukemia (T-ALL) transformation by promoting ARE-mediated mRNA decay of the oncogenic transcription factor NOTCH1 mRNA. Involved in the delivery of target ARE-mRNAs to processing bodies (PBs). In addition to its cytosolic mRNA-decay function, plays a role in the regulation of nuclear mRNA 3'-end processing; modulates mRNA 3'-end maturation efficiency of the DLL4 mRNA through binding with an ARE embedded in a weak noncanonical polyadenylation (poly(A)) signal in endothelial cells. Also involved in the regulation of stress granule (SG) and P-body (PB) formation and fusion. Plays a role in vasculogenesis and endocardial development. Involved in the regulation of keratinocyte proliferation, differentiation and apoptosis. Plays a role in myoblast cell differentiation. The chain is mRNA decay activator protein ZFP36L1 from Mus musculus (Mouse).